A 328-amino-acid polypeptide reads, in one-letter code: 4-hydroxythreonine-4-phosphate dehydrogenase (328 aa).

Substrate-binding residues include H130 and T131. A divalent metal cation is bound by residues H163, H208, and H263. Substrate contacts are provided by K271, N280, and R289.

This sequence belongs to the PdxA family. As to quaternary structure, homodimer. Requires Zn(2+) as cofactor. Mg(2+) is required as a cofactor. It depends on Co(2+) as a cofactor.

The protein localises to the cytoplasm. It catalyses the reaction 4-(phosphooxy)-L-threonine + NAD(+) = 3-amino-2-oxopropyl phosphate + CO2 + NADH. It participates in cofactor biosynthesis; pyridoxine 5'-phosphate biosynthesis; pyridoxine 5'-phosphate from D-erythrose 4-phosphate: step 4/5. Its function is as follows. Catalyzes the NAD(P)-dependent oxidation of 4-(phosphooxy)-L-threonine (HTP) into 2-amino-3-oxo-4-(phosphooxy)butyric acid which spontaneously decarboxylates to form 3-amino-2-oxopropyl phosphate (AHAP). The protein is 4-hydroxythreonine-4-phosphate dehydrogenase of Burkholderia vietnamiensis (strain G4 / LMG 22486) (Burkholderia cepacia (strain R1808)).